The primary structure comprises 520 residues: Sodium-dependent dicarboxylate transporter SdcS (520 aa).

Helical transmembrane passes span 30-50 (AGQL…LLFF), 55-75 (LPWK…WWIT), 77-97 (AIPI…GHIL), 104-124 (SEYG…AIAM), 160-180 (SMFV…LAII), 207-227 (IGYA…PLII), 242-262 (FAKW…ITWL), 298-318 (KVVQ…EFLL), 323-343 (VTSS…LFII), 362-382 (ELPW…KGIS), 399-419 (GVSP…LTEV), 428-448 (MILP…LLLM), 452-472 (AMAA…AIIF), and 491-511 (LISA…VLGI).

It belongs to the SLC13A/DASS transporter (TC 2.A.47) family. NADC subfamily.

The protein resides in the cell membrane. Its function is as follows. Mediates the transport of the dicarboxylates fumarate, malate, and succinate across the cytoplasmic membrane via a Na(+)-electrochemical gradient. The sequence is that of Sodium-dependent dicarboxylate transporter SdcS (sdcS) from Staphylococcus aureus (strain USA300).